Here is an 81-residue protein sequence, read N- to C-terminus: Large ribosomal subunit protein bL27 (81 aa).

Residues 1-22 are disordered; the sequence is MAHKTGQSSSSNGRESKSKRLG.

It belongs to the bacterial ribosomal protein bL27 family.

The polypeptide is Large ribosomal subunit protein bL27 (Opitutus terrae (strain DSM 11246 / JCM 15787 / PB90-1)).